The chain runs to 313 residues: Ribosomal RNA small subunit methyltransferase H (313 aa).

Residues 35–37 (GGH), Asp55, Phe79, Asp101, and Gln108 contribute to the S-adenosyl-L-methionine site.

This sequence belongs to the methyltransferase superfamily. RsmH family.

It localises to the cytoplasm. It catalyses the reaction cytidine(1402) in 16S rRNA + S-adenosyl-L-methionine = N(4)-methylcytidine(1402) in 16S rRNA + S-adenosyl-L-homocysteine + H(+). Specifically methylates the N4 position of cytidine in position 1402 (C1402) of 16S rRNA. The sequence is that of Ribosomal RNA small subunit methyltransferase H from Salmonella paratyphi A (strain ATCC 9150 / SARB42).